Reading from the N-terminus, the 177-residue chain is MRAKGLLKEYEVVGRKLPSEKEPQTPLYKMRIFAPDNIVAKSRFWYFLRQLKKFKKTTGEIVSIKQVYETSPVKIKNFGIWLRYDSRSGTHNMYREYRDLTVGGAVTQCYRDMGARHRARAHSIQIIKVDSIPAAKTRRVHVKQFHDSKIKFPLVQRVHHKGNRKLFSFRKPRTYFQ.

This sequence belongs to the eukaryotic ribosomal protein eL20 family.

The sequence is that of Large ribosomal subunit protein eL20 (RpL18A) from Drosophila melanogaster (Fruit fly).